The primary structure comprises 134 residues: Putative toxin MJ0605 (134 aa).

Belongs to the UPF0332 family.

Functionally, putative toxin component of a putative type VII toxin-antitoxin (TA) system. Its cognate antitoxin might be MJ0604. This Methanocaldococcus jannaschii (strain ATCC 43067 / DSM 2661 / JAL-1 / JCM 10045 / NBRC 100440) (Methanococcus jannaschii) protein is Putative toxin MJ0605.